The sequence spans 63 residues: Large ribosomal subunit protein uL29 (63 aa).

The protein belongs to the universal ribosomal protein uL29 family.

The polypeptide is Large ribosomal subunit protein uL29 (Azotobacter vinelandii (strain DJ / ATCC BAA-1303)).